Here is a 181-residue protein sequence, read N- to C-terminus: Transmembrane protein 190 (181 aa).

Residues M1–G21 form the signal peptide. Residues N22 to M81 are Extracellular-facing. One can recognise a P-type domain in the interval W31–R71. Intrachain disulfides connect C33–C61, C43–C60, and C55–C67. Residues W82–W102 traverse the membrane as a helical segment. Over W103–D181 the chain is Cytoplasmic. Positions T135 to D181 are disordered. Polar residues predominate over residues S142–T152. Residues G170–D181 show a composition bias toward acidic residues.

The protein resides in the membrane. This is Transmembrane protein 190 (TMEM190) from Canis lupus familiaris (Dog).